A 199-amino-acid chain; its full sequence is N-(5'-phosphoribosyl)anthranilate isomerase (199 aa).

Belongs to the TrpF family.

It catalyses the reaction N-(5-phospho-beta-D-ribosyl)anthranilate = 1-(2-carboxyphenylamino)-1-deoxy-D-ribulose 5-phosphate. The protein operates within amino-acid biosynthesis; L-tryptophan biosynthesis; L-tryptophan from chorismate: step 3/5. The sequence is that of N-(5'-phosphoribosyl)anthranilate isomerase from Lacticaseibacillus casei (strain BL23) (Lactobacillus casei).